Reading from the N-terminus, the 262-residue chain is Adenosylcobinamide-GDP ribazoletransferase (262 aa).

Transmembrane regions (helical) follow at residues Ala-4–Trp-26, Cys-37–Ser-57, Phe-59–Ala-79, Val-112–Tyr-132, Ile-139–Leu-159, Ala-183–Ile-203, Val-205–Trp-225, and Val-237–His-257.

Belongs to the CobS family. Mg(2+) serves as cofactor.

It localises to the cell membrane. The enzyme catalyses alpha-ribazole + adenosylcob(III)inamide-GDP = adenosylcob(III)alamin + GMP + H(+). It catalyses the reaction alpha-ribazole 5'-phosphate + adenosylcob(III)inamide-GDP = adenosylcob(III)alamin 5'-phosphate + GMP + H(+). It participates in cofactor biosynthesis; adenosylcobalamin biosynthesis; adenosylcobalamin from cob(II)yrinate a,c-diamide: step 7/7. In terms of biological role, joins adenosylcobinamide-GDP and alpha-ribazole to generate adenosylcobalamin (Ado-cobalamin). Also synthesizes adenosylcobalamin 5'-phosphate from adenosylcobinamide-GDP and alpha-ribazole 5'-phosphate. This chain is Adenosylcobinamide-GDP ribazoletransferase, found in Geobacillus kaustophilus (strain HTA426).